Here is an 853-residue protein sequence, read N- to C-terminus: Trimethylguanosine synthase (853 aa).

The tract at residues 53 to 80 (NNSGDQATEEEEGGYSCGTAESHDSKGI) is disordered. Ser-55 carries the phosphoserine modification. Thr-60 is subject to Phosphothreonine. Residues Ser-85, Ser-89, Ser-96, and Ser-141 each carry the phosphoserine modification. Tyr-146 bears the Phosphotyrosine mark. A disordered region spans residues 149–187 (DDILASDDPSSIEQYENTRTYELQSKKDTETENPPVENT). A Phosphoserine modification is found at Ser-154. The span at 156-171 (DPSSIEQYENTRTYEL) shows a compositional bias: polar residues. Ser-189 carries the phosphoserine modification. 2 disordered regions span residues 334-461 (SQLD…GGIP) and 527-632 (DEEA…KKVN). Positions 367–382 (NGGTNEESNSSGNTNT) are enriched in low complexity. Phosphoserine occurs at positions 412, 438, and 578. The segment covering 431-442 (DIDENPASDFDD) has biased composition (acidic residues). The span at 564–578 (ETNNPEPEKCQSVSS) shows a compositional bias: polar residues. The span at 608–619 (PDSRQAETEAEV) shows a compositional bias: basic and acidic residues. Positions 620–630 (KKKKNKKKNKK) are enriched in basic residues. Positions 631-846 (VNGLPPEIAA…TITAYFGDLI (216 aa)) are sufficient for catalytic activity. Residue Asp-719 coordinates S-adenosyl-L-methionine. Trp-766 provides a ligand contact to N(7)-methylguanosine.

This sequence belongs to the methyltransferase superfamily. Trimethylguanosine synthase family. In terms of assembly, may form homooligomers. Interacts with CREBBP/CBP, EED/WAIT1, EP300/P300, NCOA6/PRIP, PPARBP/PBP and SMN. Ubiquitously expressed. High expression in heart, skeletal muscle, kidney, liver and placenta.

It is found in the cytoplasm. Its subcellular location is the nucleus. The protein localises to the cajal body. It localises to the nucleolus. It catalyses the reaction a 5'-end (N(7)-methyl 5'-triphosphoguanosine)-ribonucleoside in snRNA + S-adenosyl-L-methionine = a 5'-end (N(2),N(7)-dimethyl 5'-triphosphoguanosine)-ribonucleoside in snRNA + S-adenosyl-L-homocysteine + H(+). The enzyme catalyses a 5'-end (N(7)-methyl 5'-triphosphoguanosine)-ribonucleoside in snoRNA + S-adenosyl-L-methionine = a 5'-end (N(2),N(7)-dimethyl 5'-triphosphoguanosine)-ribonucleoside in snoRNA + S-adenosyl-L-homocysteine + H(+). It carries out the reaction a 5'-end (N(2),N(7)-dimethyl 5'-triphosphoguanosine)-ribonucleoside in snRNA + S-adenosyl-L-methionine = a 5'-end (N(2),N(2),N(7)-trimethyl 5'-triphosphoguanosine)-ribonucleoside in snRNA + S-adenosyl-L-homocysteine + H(+). The catalysed reaction is a 5'-end (N(2),N(7)-dimethyl 5'-triphosphoguanosine)-ribonucleoside in snoRNA + S-adenosyl-L-methionine = a 5'-end (N(2),N(2),N(7)-trimethyl 5'-triphosphoguanosine)-ribonucleoside in snoRNA + S-adenosyl-L-homocysteine + H(+). In terms of biological role, catalyzes the 2 serial methylation steps for the conversion of the 7-monomethylguanosine (m(7)G) caps of snRNAs and snoRNAs to a 2,2,7-trimethylguanosine (m(2,2,7)G) cap structure. The enzyme is specific for guanine, and N7 methylation must precede N2 methylation. Hypermethylation of the m7G cap of U snRNAs leads to their concentration in nuclear foci, their colocalization with coilin and the formation of canonical Cajal bodies (CBs). Plays a role in transcriptional regulation. The polypeptide is Trimethylguanosine synthase (TGS1) (Homo sapiens (Human)).